The sequence spans 573 residues: Probable D-xylulose kinase A (573 aa).

The substrate site is built by histidine 97, arginine 168, aspartate 284, and asparagine 285. Residues tryptophan 366, glycine 471–glycine 472, and asparagine 475 contribute to the ATP site.

This sequence belongs to the FGGY kinase family.

Its subcellular location is the cytoplasm. The catalysed reaction is D-xylulose + ATP = D-xylulose 5-phosphate + ADP + H(+). In terms of biological role, highly specific D-xylulose kinase which participates in the catabolism of xylose. Xylose is a major component of hemicelluloses such as xylan. Most fungi utilize D-xylose via three enzymatic reactions, xylose reductase (XR), xylitol dehydrogenase (XDH), and xylulokinase, to form xylulose 5-phosphate, which enters pentose phosphate pathway. This Neosartorya fischeri (strain ATCC 1020 / DSM 3700 / CBS 544.65 / FGSC A1164 / JCM 1740 / NRRL 181 / WB 181) (Aspergillus fischerianus) protein is Probable D-xylulose kinase A (xkiA).